The primary structure comprises 117 residues: Non-specific lipid-transfer protein Lac s 1 (117 aa).

The N-terminal stretch at 1 to 25 (MARMAMMILCVVLTCMVVATPYTEA) is a signal peptide. Intrachain disulfides connect Cys29–Cys76, Cys39–Cys53, Cys54–Cys99, and Cys74–Cys113.

It belongs to the plant LTP family.

Plant non-specific lipid-transfer proteins transfer phospholipids as well as galactolipids across membranes. May play a role in wax or cutin deposition in the cell walls of expanding epidermal cells and certain secretory tissues. The protein is Non-specific lipid-transfer protein Lac s 1 of Lactuca sativa (Garden lettuce).